The sequence spans 735 residues: MATKLFPKFSQGLAQDPTTRRIWFGLAVAHDFESHDGMTEENLYQKIFASHFGQLAIIFLWTSGNLFHVAWQGNFEQWVTDPVHVRPIAHAIWDPHFGTSAVEAFTRGGASGPVNIATSGVYQWWYTIGMRTNQDLFTGSVFLALVSAVFLFAGWLHLQPNFQPSLSWFKDAESRLNHHLSGLFGVSSLAWTGHLVHVAIPESRGRHVGWDNFLSVLPHPQGLAPFWSGNWAAYAQNPDTASHAFGTSEGSGQAILTFLGGFHPQTQSLWLSDMAHHHLAIAVIFIVAGHMYRTNFGIGHRLQAILDAHVPPSGNLGAGHKGLFDTVNNSLHFQLGLALASVGTITSMIAQHIYSLPPYAYLAIDFTTQAALYTHHQYIAGFIMCGAFAHGAIFFIRDYDPEANKGNVLARILDHKEAIISHLSWVTLFLGFHTLGLYVHNDVMQAFGTPEKQILIEPVFAQWIQAAQGKTVYGFDLLLSSSTSVASTAGQSVWLPGWLDAINNNQNTLFLTIGPGDFLVHHAIALGLHTTTLILVKGALDARGSKLMPDKKDFGYSFPCDGPGRGGTCDISAYDAFYLAVFWMLNTIGWVTFYFHWKHLALWQGNVAQFDESSTYLMGWLRDYLWLNSSQLINGYNPFGMNSLSVWAFCFLFGHLIYATGFMFLISWRGYWQELIETLVWAHEKTPLANIVYWKDKPVALSIVQARLVGLVHFSVGYIFTYAAFLIASTSGRFG.

The next 8 membrane-spanning stretches (helical) occupy residues 47 to 70 (IFAS…FHVA), 136 to 159 (LFTG…LHLQ), 176 to 200 (LNHH…HVAI), 274 to 292 (MAHH…GHMY), 331 to 354 (LHFQ…QHIY), 370 to 396 (AALY…IFFI), 418 to 440 (AIIS…LYVH), and 518 to 536 (FLVH…LILV). Residues Cys560 and Cys569 each contribute to the [4Fe-4S] cluster site. The next 2 helical transmembrane spans lie at 576-597 (AFYL…YFHW) and 644-666 (LSVW…MFLI). His655, Met663, and Tyr671 together coordinate chlorophyll a. Phylloquinone is bound at residue Trp672. Residues 708 to 728 (LVGLVHFSVGYIFTYAAFLIA) traverse the membrane as a helical segment.

This sequence belongs to the PsaA/PsaB family. As to quaternary structure, the PsaA/B heterodimer binds the P700 chlorophyll special pair and subsequent electron acceptors. PSI consists of a core antenna complex that captures photons, and an electron transfer chain that converts photonic excitation into a charge separation. The eukaryotic PSI reaction center is composed of at least 11 subunits. Requires P700 is a chlorophyll a/chlorophyll a' dimer, A0 is one or more chlorophyll a, A1 is one or both phylloquinones and FX is a shared 4Fe-4S iron-sulfur center. as cofactor.

The protein resides in the plastid. Its subcellular location is the chloroplast thylakoid membrane. The enzyme catalyses reduced [plastocyanin] + hnu + oxidized [2Fe-2S]-[ferredoxin] = oxidized [plastocyanin] + reduced [2Fe-2S]-[ferredoxin]. Functionally, psaA and PsaB bind P700, the primary electron donor of photosystem I (PSI), as well as the electron acceptors A0, A1 and FX. PSI is a plastocyanin/cytochrome c6-ferredoxin oxidoreductase, converting photonic excitation into a charge separation, which transfers an electron from the donor P700 chlorophyll pair to the spectroscopically characterized acceptors A0, A1, FX, FA and FB in turn. Oxidized P700 is reduced on the lumenal side of the thylakoid membrane by plastocyanin or cytochrome c6. The protein is Photosystem I P700 chlorophyll a apoprotein A2 of Chlamydomonas moewusii (Chlamydomonas eugametos).